We begin with the raw amino-acid sequence, 310 residues long: DNA repair nuclease APEX1 (310 aa).

The tract at residues methionine 1–arginine 51 is disordered. The span at proline 41–arginine 51 shows a compositional bias: basic and acidic residues. Mg(2+) contacts are provided by aspartate 63 and glutamate 89. Residue tyrosine 164 is part of the active site. Aspartate 203, asparagine 205, and aspartate 300 together coordinate Mg(2+). Aspartate 203 (proton donor/acceptor) is an active-site residue.

It belongs to the DNA repair enzymes AP/ExoA family. Mg(2+) is required as a cofactor. Mn(2+) serves as cofactor.

Its subcellular location is the nucleus. The protein resides in the nucleolus. It is found in the nucleus speckle. The protein localises to the endoplasmic reticulum. It localises to the cytoplasm. Its subcellular location is the mitochondrion. The enzyme catalyses Exonucleolytic cleavage in the 3'- to 5'-direction to yield nucleoside 5'-phosphates.. In terms of biological role, functions as an apurinic/apyrimidinic (AP) endodeoxyribonuclease in the DNA base excision repair (BER) pathway of DNA lesions induced by oxidative and alkylating agents. Initiates repair of AP sites in DNA by catalyzing hydrolytic incision of the phosphodiester backbone immediately adjacent to the damage, generating a single-strand break with 5'-deoxyribose phosphate and 3'-hydroxyl ends. Has 3'-5' exoribonuclease activity on mismatched deoxyribonucleotides at the 3' termini of nicked or gapped DNA molecules during short-patch BER. May also play a role in the epigenetic regulation of gene expression by participating in DNA demethylation. Required for passage through the mid-blastula transition MBT. May also act as an endoribonuclease involved in the control of single-stranded RNA metabolism. Has no redox activity. Binds DNA and RNA. In Danio rerio (Zebrafish), this protein is DNA repair nuclease APEX1 (apex1).